Reading from the N-terminus, the 369-residue chain is MYGILVLEDGTIIRGKGFGAEAEVLGELVFNTSMTGYVEILTDPSYNGQIVTMTYPLEGNYGVDKRWFESEGIKAEGFIVKDMTGIELDSFLKEYGVPGISDVDTRFITKKIRSKGVVKSLLKTSATEISEEEEKELVNKVRNYEDISDIDLVPEVSTKKVVKYPAKDEKISCVVIDCGVKQSILNCLLERGCSVVKVPYDTKEEEILSYNPDFVLVSNGPGDPEKMLETANTVKNLFGKLPVTGICLGHQIITIALGGKTYKLKFGHRGGNQPVKDSSTGKVYITSQNHGFATDMSNVPEGSILSHVNLNDDTVEGISKIMDSDNVKGVVWSVQHHPEAGPGPHDAMFLFDDMVALGMKFKQEKTSKR.

The interval 1-168 is CPSase; it reads MYGILVLEDG…KKVVKYPAKD (168 aa). L-glutamine-binding residues include Ser-45, Gly-220, and Gly-222. Residues 172–364 form the Glutamine amidotransferase type-1 domain; the sequence is SCVVIDCGVK…VALGMKFKQE (193 aa). The Nucleophile role is filled by Cys-247. L-glutamine contacts are provided by Leu-248, Gln-251, Asn-289, Gly-291, and Phe-292. Catalysis depends on residues His-337 and Glu-339.

Belongs to the CarA family. In terms of assembly, composed of two chains; the small (or glutamine) chain promotes the hydrolysis of glutamine to ammonia, which is used by the large (or ammonia) chain to synthesize carbamoyl phosphate. Tetramer of heterodimers (alpha,beta)4.

It carries out the reaction hydrogencarbonate + L-glutamine + 2 ATP + H2O = carbamoyl phosphate + L-glutamate + 2 ADP + phosphate + 2 H(+). It catalyses the reaction L-glutamine + H2O = L-glutamate + NH4(+). Its pathway is amino-acid biosynthesis; L-arginine biosynthesis; carbamoyl phosphate from bicarbonate: step 1/1. The protein operates within pyrimidine metabolism; UMP biosynthesis via de novo pathway; (S)-dihydroorotate from bicarbonate: step 1/3. In terms of biological role, small subunit of the glutamine-dependent carbamoyl phosphate synthetase (CPSase). CPSase catalyzes the formation of carbamoyl phosphate from the ammonia moiety of glutamine, carbonate, and phosphate donated by ATP, constituting the first step of 2 biosynthetic pathways, one leading to arginine and/or urea and the other to pyrimidine nucleotides. The small subunit (glutamine amidotransferase) binds and cleaves glutamine to supply the large subunit with the substrate ammonia. The chain is Carbamoyl phosphate synthase small chain from Methanococcus vannielii (strain ATCC 35089 / DSM 1224 / JCM 13029 / OCM 148 / SB).